Here is a 98-residue protein sequence, read N- to C-terminus: Plastocyanin (98 aa).

Positions 1–98 (DVTVKLGADS…AGMKGTITVQ (98 aa)) constitute a Plastocyanin-like domain. Cu cation is bound by residues His38, Cys83, His86, and Met91.

This sequence belongs to the plastocyanin family. Cu(2+) is required as a cofactor.

Its subcellular location is the plastid. It is found in the chloroplast thylakoid membrane. In terms of biological role, participates in electron transfer between P700 and the cytochrome b6-f complex in photosystem I. This Scenedesmus fuscus (Green alga) protein is Plastocyanin (petE).